A 138-amino-acid chain; its full sequence is ATP synthase epsilon chain (138 aa).

This sequence belongs to the ATPase epsilon chain family. As to quaternary structure, F-type ATPases have 2 components, CF(1) - the catalytic core - and CF(0) - the membrane proton channel. CF(1) has five subunits: alpha(3), beta(3), gamma(1), delta(1), epsilon(1). CF(0) has three main subunits: a, b and c.

Its subcellular location is the cell inner membrane. Produces ATP from ADP in the presence of a proton gradient across the membrane. The sequence is that of ATP synthase epsilon chain from Cupriavidus necator (strain ATCC 17699 / DSM 428 / KCTC 22496 / NCIMB 10442 / H16 / Stanier 337) (Ralstonia eutropha).